Consider the following 337-residue polypeptide: PHD finger protein 11 (337 aa).

A C2HC pre-PHD-type zinc finger spans residues 42 to 78 (KRICALCPKDLECSVLYFAQSENIAAHENCLLYSSAL). The PHD-type zinc finger occupies 108-160 (LKCTFCGKKGATVGCDLKSCFKNYHFFCAKNDHAVLQADGRTGIYKVFCQQHA).

In terms of assembly, interacts with BRCA1 and RELA.

Its subcellular location is the nucleus. Functionally, positive regulator of Th1-type cytokine gene expression. This is PHD finger protein 11 (PHF11) from Bos taurus (Bovine).